The following is a 221-amino-acid chain: PKHD-type hydroxylase Pro_1271 (221 aa).

In terms of domain architecture, Fe2OG dioxygenase spans 80 to 174; sequence KVHGVMFSKS…RIVCVGWIQS (95 aa). Histidine 98, aspartate 100, and histidine 155 together coordinate Fe cation. Arginine 165 contacts 2-oxoglutarate.

The cofactor is Fe(2+). L-ascorbate serves as cofactor.

The protein is PKHD-type hydroxylase Pro_1271 of Prochlorococcus marinus (strain SARG / CCMP1375 / SS120).